A 646-amino-acid chain; its full sequence is Threonine--tRNA ligase (646 aa).

The TGS domain occupies M1–T63. Residues D247–P544 are catalytic. Residues C344, H395, and H521 each contribute to the Zn(2+) site.

The protein belongs to the class-II aminoacyl-tRNA synthetase family. In terms of assembly, homodimer. Zn(2+) is required as a cofactor.

The protein localises to the cytoplasm. The catalysed reaction is tRNA(Thr) + L-threonine + ATP = L-threonyl-tRNA(Thr) + AMP + diphosphate + H(+). Functionally, catalyzes the attachment of threonine to tRNA(Thr) in a two-step reaction: L-threonine is first activated by ATP to form Thr-AMP and then transferred to the acceptor end of tRNA(Thr). Also edits incorrectly charged L-seryl-tRNA(Thr). This chain is Threonine--tRNA ligase, found in Cereibacter sphaeroides (strain ATCC 17023 / DSM 158 / JCM 6121 / CCUG 31486 / LMG 2827 / NBRC 12203 / NCIMB 8253 / ATH 2.4.1.) (Rhodobacter sphaeroides).